A 57-amino-acid chain; its full sequence is MSEFTVRGRFPARYGEQNFEKNVEAPNEDVAQERVYANFGSQHGLKRTQITIDEVDA.

This sequence belongs to the eukaryotic ribosomal protein eL20 family. In terms of assembly, part of the 50S ribosomal subunit. Binds 23S rRNA.

This Natronomonas pharaonis (strain ATCC 35678 / DSM 2160 / CIP 103997 / JCM 8858 / NBRC 14720 / NCIMB 2260 / Gabara) (Halobacterium pharaonis) protein is Large ribosomal subunit protein eL20.